The following is a 584-amino-acid chain: N(6)-adenosine-methyltransferase subunit METTL3 (584 aa).

Disordered regions lie at residues M1–P65 and K162–V221. Residues R187–S204 show a composition bias toward polar residues. The Nuclear localization signal motif lies at D213–K220. S-adenosyl-L-methionine-binding positions include D381–I382 and D399. Residues P400–T414 are gate loop 1. 2 interaction with METTL14 regions span residues D454 to E458 and Q468 to K484. The tract at residues Q466–G483 is interphase loop. A positively charged region required for RNA-binding region spans residues R469 to H482. Positions V511–D519 are gate loop 2. Residues K517, R540 to N543, and N553 to Q554 contribute to the S-adenosyl-L-methionine site.

This sequence belongs to the MT-A70-like family. As to quaternary structure, heterodimer; heterodimerizes with mettl14 to form an antiparallel heterodimer that constitutes an active methyltransferase. Component of the WMM complex, a N6-methyltransferase complex composed of a catalytic subcomplex, named MAC, and of an associated subcomplex, named MACOM. The MAC subcomplex is composed of mettl3 and mettl14. In terms of tissue distribution, expressed in the hemato-vascular system: enriched in sorted endothelial cells and haemogenic endothelium.

It is found in the nucleus. The protein localises to the nucleus speckle. It localises to the cytoplasm. The catalysed reaction is an adenosine in mRNA + S-adenosyl-L-methionine = an N(6)-methyladenosine in mRNA + S-adenosyl-L-homocysteine + H(+). Its function is as follows. The METTL3-METTL14 heterodimer forms a N6-methyltransferase complex that methylates adenosine residues at the N(6) position of some RNAs and regulates various processes such as the circadian clock, differentiation of embryonic and hematopoietic stem cells, cortical neurogenesis, response to DNA damage, differentiation of T-cells and primary miRNA processing. In the heterodimer formed with mettl14, mettl3 constitutes the catalytic core. N6-methyladenosine (m6A), which takes place at the 5'-[AG]GAC-3' consensus sites of some mRNAs, plays a role in mRNA stability, processing and translation efficiency. M6A is also involved in hematopoietic stem cells specification: m6A methylation and subsequent destabilization of mRNAs, such as notch1a, leads to decreased Notch signaling, promoting endothelial to hematopoietic transition. M6A also takes place in other RNA molecules, such as primary miRNA (pri-miRNAs). Mediates methylation of pri-miRNAs. This Danio rerio (Zebrafish) protein is N(6)-adenosine-methyltransferase subunit METTL3.